An 804-amino-acid polypeptide reads, in one-letter code: Exocyst complex component 6 (804 aa).

It belongs to the SEC15 family. As to quaternary structure, the exocyst complex is composed of EXOC1, EXOC2, EXOC3, EXOC4, EXOC5, EXOC6, EXOC7 and EXOC8. Interacts with CNTRL. Interacts with RAB11A in a GTP-dependent manner.

It localises to the cytoplasm. The protein localises to the perinuclear region. It is found in the cell projection. The protein resides in the growth cone. Its subcellular location is the midbody. It localises to the midbody ring. Functionally, component of the exocyst complex involved in the docking of exocytic vesicles with fusion sites on the plasma membrane. Together with RAB11A, RAB3IP, RAB8A, PARD3, PRKCI, ANXA2, CDC42 and DNMBP promotes transcytosis of PODXL to the apical membrane initiation sites (AMIS), apical surface formation and lumenogenesis. In Rattus norvegicus (Rat), this protein is Exocyst complex component 6 (Exoc6).